Reading from the N-terminus, the 78-residue chain is U-scoloptoxin(04)-Er1b (78 aa).

A signal peptide spans 1–24 (MTRHLIFAAVLLVCLFVCWNAVGA). Residues 25–28 (QDAR) constitute a propeptide that is removed on maturation.

The protein belongs to the scoloptoxin-04 family. In terms of processing, contains 2 disulfide bonds. As to expression, expressed by the venom gland.

It is found in the secreted. In Ethmostigmus rubripes (Giant centipede), this protein is U-scoloptoxin(04)-Er1b.